The following is a 167-amino-acid chain: uncharacterized protein (167 aa).

The a divalent metal cation site is built by H48, H127, and H131.

It belongs to the DinB family.

This is an uncharacterized protein from Bacillus subtilis (strain 168).